The following is a 237-amino-acid chain: Class B acid phosphatase (237 aa).

An N-terminal signal peptide occupies residues 1–23 (MRKVTLTLSAIALALSLNGAAMA). Asp-69 (nucleophile) is an active-site residue. Positions 69 and 71 each coordinate Mg(2+). The Proton donor role is filled by Asp-71. Residues 137-138 (TG) and Lys-177 contribute to the substrate site. Asp-192 serves as a coordination point for Mg(2+).

This sequence belongs to the class B bacterial acid phosphatase family. As to quaternary structure, homotetramer. Mg(2+) is required as a cofactor.

Its subcellular location is the periplasm. The catalysed reaction is a phosphate monoester + H2O = an alcohol + phosphate. Dephosphorylates several organic phosphate monoesters. Also has a phosphotransferase activity catalyzing the transfer of low-energy phosphate groups from organic phosphate monoesters to free hydroxyl groups of various organic compounds. In Proteus mirabilis (strain HI4320), this protein is Class B acid phosphatase.